The primary structure comprises 231 residues: Ribosyldihydronicotinamide dehydrogenase [quinone] (231 aa).

FAD-binding positions include His-12 and 18 to 21; that span reads FNGS. Phosphoserine is present on Ser-80. 104–107 is a binding site for FAD; it reads LYWF. 127–129 provides a ligand contact to substrate; that stretch reads FDI. FAD is bound by residues 148–151 and Tyr-156; that span reads TTGG. 2 residues coordinate Zn(2+): His-174 and His-178. Glu-194 contacts FAD. The residue at position 197 (Ser-197) is a Phosphoserine. Residue Arg-201 participates in FAD binding. Zn(2+) is bound at residue Cys-223.

Belongs to the NAD(P)H dehydrogenase (quinone) family. As to quaternary structure, homodimer. The cofactor is Zn(2+). Requires FAD as cofactor.

The protein localises to the cytoplasm. The enzyme catalyses 1-(beta-D-ribofuranosyl)-1,4-dihydronicotinamide + a quinone + H(+) = beta-nicotinamide D-riboside + a quinol. With respect to regulation, inhibited by melatonin, resveratrol and 5-hydroxytryptamine. The enzyme apparently serves as a quinone reductase in connection with conjugation reactions of hydroquinones involved in detoxification pathways as well as in biosynthetic processes such as the vitamin K-dependent gamma-carboxylation of glutamate residues in prothrombin synthesis. In Homo sapiens (Human), this protein is Ribosyldihydronicotinamide dehydrogenase [quinone] (NQO2).